Reading from the N-terminus, the 422-residue chain is DNA (cytosine-5)-methyltransferase 3-like (422 aa).

The segment covering 1–11 (MGSRETPSSCS) has biased composition (polar residues). The tract at residues 1–50 (MGSRETPSSCSKTHETLNLETPESSSTDPDSPLEEQWPKSAPDLKEEDSM) is disordered. Residues 20–30 (ETPESSSTDPD) show a composition bias toward low complexity. The region spanning 76 to 208 (EVNVNQRNIE…LKAFHDREGA (133 aa)) is the ADD domain. A GATA-type; atypical zinc finger spans residues 87–117 (ICLCCGSLQVYAQHPLFEGGICAPCKDKFLE). The PHD-type; atypical zinc finger occupies 128–184 (QSYCTICCSGHTLFICESPDCTRCYCFECVDILVGPGTSERINAMACWVCFLCLPFS).

As to quaternary structure, homodimer. Heterotetramer composed of 1 DNMT3A homodimer and 2 DNMT3L subunits (DNMT3L-DNMT3A-DNMT3A-DNMT3L). Interacts with histone H3 (via N-terminus); interaction is strongly inhibited by methylation at lysine 4 (H3K4me). Interacts with EZH2; the interaction is direct. Interacts with SPOCD1.

The protein resides in the nucleus. Catalytically inactive regulatory factor of DNA methyltransferases that can either promote or inhibit DNA methylation depending on the context. Essential for the function of DNMT3A and DNMT3B: activates DNMT3A and DNMT3B by binding to their catalytic domain. Acts by accelerating the binding of DNA and S-adenosyl-L-methionine (AdoMet) to the methyltransferases and dissociates from the complex after DNA binding to the methyltransferases. Recognizes unmethylated histone H3 lysine 4 (H3K4me0) and induces de novo DNA methylation by recruitment or activation of DNMT3. Plays a key role in embryonic stem cells and germ cells. In germ cells, required for the methylation of imprinted loci together with DNMT3A. In male germ cells, specifically required to methylate retrotransposons, preventing their mobilization. Plays a key role in embryonic stem cells (ESCs) by acting both as an positive and negative regulator of DNA methylation. While it promotes DNA methylation of housekeeping genes together with DNMT3A and DNMT3B, it also acts as an inhibitor of DNA methylation at the promoter of bivalent genes. Interacts with the EZH2 component of the PRC2/EED-EZH2 complex, preventing interaction of DNMT3A and DNMT3B with the PRC2/EED-EZH2 complex, leading to maintain low methylation levels at the promoters of bivalent genes. Promotes differentiation of ESCs into primordial germ cells by inhibiting DNA methylation at the promoter of RHOX5, thereby activating its expression. The sequence is that of DNA (cytosine-5)-methyltransferase 3-like (Dnmt3l) from Rattus norvegicus (Rat).